We begin with the raw amino-acid sequence, 573 residues long: Membrane protein insertase YidC (573 aa).

A run of 6 helical transmembrane segments spans residues 6–26 (VFLI…WGKD), 355–375 (FSIM…LHSF), 379–399 (WGWA…PLSA), 446–466 (GGCL…WVLV), 488–508 (PYFI…KLTP), and 524–544 (PLVF…YWVV).

It belongs to the OXA1/ALB3/YidC family. Type 1 subfamily. Interacts with the Sec translocase complex via SecD. Specifically interacts with transmembrane segments of nascent integral membrane proteins during membrane integration.

It localises to the cell inner membrane. Required for the insertion and/or proper folding and/or complex formation of integral membrane proteins into the membrane. Involved in integration of membrane proteins that insert both dependently and independently of the Sec translocase complex, as well as at least some lipoproteins. Aids folding of multispanning membrane proteins. The sequence is that of Membrane protein insertase YidC from Xanthomonas campestris pv. campestris (strain ATCC 33913 / DSM 3586 / NCPPB 528 / LMG 568 / P 25).